A 158-amino-acid chain; its full sequence is Transcription elongation factor GreA (158 aa).

Residues 45–72 (AEYHAAREQQSFIEGRIKQLEGELSHAE) adopt a coiled-coil conformation.

It belongs to the GreA/GreB family.

Its function is as follows. Necessary for efficient RNA polymerase transcription elongation past template-encoded arresting sites. The arresting sites in DNA have the property of trapping a certain fraction of elongating RNA polymerases that pass through, resulting in locked ternary complexes. Cleavage of the nascent transcript by cleavage factors such as GreA or GreB allows the resumption of elongation from the new 3'terminus. GreA releases sequences of 2 to 3 nucleotides. The chain is Transcription elongation factor GreA from Xylella fastidiosa (strain M23).